A 163-amino-acid polypeptide reads, in one-letter code: NADH-quinone oxidoreductase subunit I (163 aa).

2 4Fe-4S ferredoxin-type domains span residues 55 to 84 (RRYP…IDAE) and 94 to 123 (TRYD…EGPN). [4Fe-4S] cluster-binding residues include cysteine 64, cysteine 67, cysteine 70, cysteine 74, cysteine 103, cysteine 106, cysteine 109, and cysteine 113.

The protein belongs to the complex I 23 kDa subunit family. As to quaternary structure, NDH-1 is composed of 14 different subunits. Subunits NuoA, H, J, K, L, M, N constitute the membrane sector of the complex. Requires [4Fe-4S] cluster as cofactor.

It is found in the cell inner membrane. The enzyme catalyses a quinone + NADH + 5 H(+)(in) = a quinol + NAD(+) + 4 H(+)(out). NDH-1 shuttles electrons from NADH, via FMN and iron-sulfur (Fe-S) centers, to quinones in the respiratory chain. The immediate electron acceptor for the enzyme in this species is believed to be ubiquinone. Couples the redox reaction to proton translocation (for every two electrons transferred, four hydrogen ions are translocated across the cytoplasmic membrane), and thus conserves the redox energy in a proton gradient. The chain is NADH-quinone oxidoreductase subunit I (nuoI) from Rhodobacter capsulatus (Rhodopseudomonas capsulata).